Here is a 202-residue protein sequence, read N- to C-terminus: Superoxide dismutase [Cu-Zn], chloroplastic (202 aa).

Residues 1-48 (MASQTLVSPSPLSSHSLLRTSFSGVSVKLAPQFSTLATSNFKPLTVVA) constitute a chloroplast transit peptide. Cu cation contacts are provided by histidine 94, histidine 96, and histidine 111. A disulfide bridge links cysteine 105 with cysteine 194. Zn(2+) contacts are provided by histidine 111, histidine 119, histidine 128, and aspartate 131. Histidine 168 contacts Cu cation.

It belongs to the Cu-Zn superoxide dismutase family. Homotetramer. It depends on Cu cation as a cofactor. Requires Zn(2+) as cofactor.

It is found in the plastid. Its subcellular location is the chloroplast. The enzyme catalyses 2 superoxide + 2 H(+) = H2O2 + O2. In terms of biological role, destroys radicals which are normally produced within the cells and which are toxic to biological systems. This is Superoxide dismutase [Cu-Zn], chloroplastic (SODCP) from Pisum sativum (Garden pea).